The following is a 259-amino-acid chain: MEIVIRQTPSEVGTTVADIVEGYVRRGPTTLGLATGSSPLGSYRELARRHRESGLDFSDARAFLLDEYVGLPKSHGQSYFSVIRSEFVDHVNLDPGHVLSPDGESSDIAEEGARYDAAIAEAGGIDVQLLGIGTDGHIGFNEPGSALTSRTRVKTLTEQTRLDNARFFDSVDDVPHHVLTQGLGTISEARHLVMIAFGKGKAEAIAAAAEGPLSAFCPASVMQLHRHVTVVIDEAAASKLQLADYYRYALEHKPSWQSF.

Catalysis depends on Asp-66, which acts as the Proton acceptor; for enolization step. Asp-135 functions as the For ring-opening step in the catalytic mechanism. His-137 (proton acceptor; for ring-opening step) is an active-site residue. The For ring-opening step role is filled by Glu-142.

Belongs to the glucosamine/galactosamine-6-phosphate isomerase family. NagB subfamily.

The enzyme catalyses alpha-D-glucosamine 6-phosphate + H2O = beta-D-fructose 6-phosphate + NH4(+). It functions in the pathway amino-sugar metabolism; N-acetylneuraminate degradation; D-fructose 6-phosphate from N-acetylneuraminate: step 5/5. Its function is as follows. Catalyzes the reversible isomerization-deamination of glucosamine 6-phosphate (GlcN6P) to form fructose 6-phosphate (Fru6P) and ammonium ion. The sequence is that of Glucosamine-6-phosphate deaminase from Rhodococcus opacus (strain B4).